A 101-amino-acid polypeptide reads, in one-letter code: UPF0235 protein CJA_0091 (101 aa).

The protein belongs to the UPF0235 family.

This Cellvibrio japonicus (strain Ueda107) (Pseudomonas fluorescens subsp. cellulosa) protein is UPF0235 protein CJA_0091.